Consider the following 105-residue polypeptide: Large ribosomal subunit protein uL24 (105 aa).

It belongs to the universal ribosomal protein uL24 family. In terms of assembly, part of the 50S ribosomal subunit.

One of two assembly initiator proteins, it binds directly to the 5'-end of the 23S rRNA, where it nucleates assembly of the 50S subunit. Its function is as follows. One of the proteins that surrounds the polypeptide exit tunnel on the outside of the subunit. This Hahella chejuensis (strain KCTC 2396) protein is Large ribosomal subunit protein uL24.